Consider the following 24-residue polypeptide: Humanin-like 12 (24 aa).

The protein belongs to the humanin family.

The protein resides in the secreted. The protein localises to the cytoplasm. In terms of biological role, plays a role as a neuroprotective and antiapoptotic factor. This chain is Humanin-like 12, found in Homo sapiens (Human).